The sequence spans 173 residues: Large ribosomal subunit protein uL10 (173 aa).

This sequence belongs to the universal ribosomal protein uL10 family. Part of the ribosomal stalk of the 50S ribosomal subunit. The N-terminus interacts with L11 and the large rRNA to form the base of the stalk. The C-terminus forms an elongated spine to which L12 dimers bind in a sequential fashion forming a multimeric L10(L12)X complex.

Functionally, forms part of the ribosomal stalk, playing a central role in the interaction of the ribosome with GTP-bound translation factors. This Christiangramia forsetii (strain DSM 17595 / CGMCC 1.15422 / KT0803) (Gramella forsetii) protein is Large ribosomal subunit protein uL10.